The following is an 837-amino-acid chain: Protein translocase subunit SecA 1 (837 aa).

Residues Gln-85, Gly-103–Thr-107, and Asp-492 each bind ATP. Residues Gln-787–Arg-806 are compositionally biased toward basic and acidic residues. Positions Gln-787–Lys-811 are disordered. Positions 821, 823, 832, and 833 each coordinate Zn(2+).

The protein belongs to the SecA family. Monomer and homodimer. Part of the essential Sec protein translocation apparatus which comprises SecA, SecYEG and auxiliary proteins SecDF. Other proteins may also be involved. Zn(2+) is required as a cofactor.

It is found in the cell membrane. The protein resides in the cytoplasm. It catalyses the reaction ATP + H2O + cellular proteinSide 1 = ADP + phosphate + cellular proteinSide 2.. Functionally, part of the Sec protein translocase complex. Interacts with the SecYEG preprotein conducting channel. Has a central role in coupling the hydrolysis of ATP to the transfer of proteins into and across the cell membrane, serving as an ATP-driven molecular motor driving the stepwise translocation of polypeptide chains across the membrane. The protein is Protein translocase subunit SecA 1 of Geobacillus kaustophilus (strain HTA426).